Consider the following 126-residue polypeptide: Large ribosomal subunit protein bL17 (126 aa).

It belongs to the bacterial ribosomal protein bL17 family. In terms of assembly, part of the 50S ribosomal subunit. Contacts protein L32.

The chain is Large ribosomal subunit protein bL17 from Rickettsia felis (strain ATCC VR-1525 / URRWXCal2) (Rickettsia azadi).